We begin with the raw amino-acid sequence, 214 residues long: MMAPGWWKFVTPPAALGAALFPWSRPLSFLCLGTAAFLAFFFRNPPREPPSDPSLAVSPADGRLLGYVMEAGEASDDELSSYLDDPITVSVFMSPLDVHVNRAPLDGRVVEAEILKGRFRPAFRKDSATENNRAVLLFDGDPPFVVRLVSGAVARRIDLYVQEGDEVNKGEPIGMIRFGSRVDLAVPRSSVEELLVRKGDSVKAGETPVIRVKR.

Residue Ser-180 is the Schiff-base intermediate with substrate; via pyruvic acid of the active site. Ser-180 bears the Pyruvic acid (Ser); by autocatalysis mark.

Belongs to the phosphatidylserine decarboxylase family. PSD-A subfamily. As to quaternary structure, heterodimer of a large membrane-associated beta subunit and a small pyruvoyl-containing alpha subunit. Pyruvate serves as cofactor. Is synthesized initially as an inactive proenzyme. Formation of the active enzyme involves a self-maturation process in which the active site pyruvoyl group is generated from an internal serine residue via an autocatalytic post-translational modification. Two non-identical subunits are generated from the proenzyme in this reaction, and the pyruvate is formed at the N-terminus of the alpha chain, which is derived from the carboxyl end of the proenzyme. The post-translation cleavage follows an unusual pathway, termed non-hydrolytic serinolysis, in which the side chain hydroxyl group of the serine supplies its oxygen atom to form the C-terminus of the beta chain, while the remainder of the serine residue undergoes an oxidative deamination to produce ammonia and the pyruvoyl prosthetic group on the alpha chain.

It localises to the cell membrane. The catalysed reaction is archaetidylserine + H(+) = archaetidylethanolamine + CO2. Catalyzes the formation of archaetidylethanolamine (PtdEtn) from archaetidylserine (PtdSer). This Methanopyrus kandleri (strain AV19 / DSM 6324 / JCM 9639 / NBRC 100938) protein is Putative archaetidylserine decarboxylase proenzyme.